A 331-amino-acid chain; its full sequence is Neurogenic differentiation factor 4 (331 aa).

The disordered stretch occupies residues 1–80; the sequence is MSKTFVKSKE…GPKKKKMTKA (80 aa). Positions 52–64 are enriched in acidic residues; that stretch reads DSIEEEEEEEEDG. Basic residues predominate over residues 67 to 79; the sequence is PKRRGPKKKKMTK. The bHLH domain occupies 87–139; sequence ARRVKANARERTRMHGLNDALDNLRRVMPCYSKTQKLSKIETLRLARNYIWAL. Residues 246-265 are disordered; sequence TPPYEGPLTPPLSISGNFSL.

In terms of assembly, efficient DNA binding requires dimerization with another bHLH protein. Serine or threonine phosphorylation within the basic region may regulate neurogenic activity.

The protein localises to the nucleus. Functionally, probably acts as a transcriptional activator. Mediates neuronal differentiation. Required for the regulation of amacrine cell fate specification in the retina. The protein is Neurogenic differentiation factor 4 (NEUROD4) of Homo sapiens (Human).